Consider the following 89-residue polypeptide: Small ribosomal subunit protein bS20 (89 aa).

The tract at residues 1–26 (MANSPQAKKRARQNEKNRKHNASLRS) is disordered. The segment covering 7 to 22 (AKKRARQNEKNRKHNA) has biased composition (basic residues).

It belongs to the bacterial ribosomal protein bS20 family.

Its function is as follows. Binds directly to 16S ribosomal RNA. This chain is Small ribosomal subunit protein bS20, found in Marinobacter nauticus (strain ATCC 700491 / DSM 11845 / VT8) (Marinobacter aquaeolei).